A 50-amino-acid polypeptide reads, in one-letter code: uncharacterized protein (50 aa).

Residues 1–22 form the signal peptide; that stretch reads MSKVAALGWGTLVYLGVGLLLA.

This is an uncharacterized protein from Dictyostelium discoideum (Social amoeba).